Consider the following 423-residue polypeptide: Gamma-glutamyl phosphate reductase (423 aa).

Positions 1–14 (MTLQAAPRSAAAQQ) are enriched in low complexity. The tract at residues 1–25 (MTLQAAPRSAAAQQREPDLRQEVHD) is disordered. Residues 15 to 25 (REPDLRQEVHD) show a composition bias toward basic and acidic residues.

The protein belongs to the gamma-glutamyl phosphate reductase family.

It localises to the cytoplasm. It carries out the reaction L-glutamate 5-semialdehyde + phosphate + NADP(+) = L-glutamyl 5-phosphate + NADPH + H(+). It functions in the pathway amino-acid biosynthesis; L-proline biosynthesis; L-glutamate 5-semialdehyde from L-glutamate: step 2/2. Its function is as follows. Catalyzes the NADPH-dependent reduction of L-glutamate 5-phosphate into L-glutamate 5-semialdehyde and phosphate. The product spontaneously undergoes cyclization to form 1-pyrroline-5-carboxylate. This chain is Gamma-glutamyl phosphate reductase, found in Mycobacterium marinum (strain ATCC BAA-535 / M).